The sequence spans 373 residues: Dof zinc finger protein 3 (373 aa).

The interval 1 to 23 is disordered; it reads MASGGALSPVEEKPTVVKTTKAE. Positions 10-23 are enriched in basic and acidic residues; it reads VEEKPTVVKTTKAE. Residues 45-99 form a Dof-type zinc finger; it reads PCCPRCNSIKTKFCYYNNYSMAQPRYFCRECRRYWTQGGSLRNVPVGGGCRKSKR. 4 residues coordinate Zn(2+): cysteine 47, cysteine 50, cysteine 72, and cysteine 75. Residues 297-327 are disordered; that stretch reads ALGGADEQQGGGDGGEAVMTKDTGGGASSSA.

In terms of assembly, interacts with RISBZ1/BZIP58.

The protein resides in the nucleus. Functionally, transcriptional activator that binds specifically to the DNA consensus core sequence 5'-AAAG-3' also known as prolamin box. Can activate the expression of genes encoding for the seed storage proteins glutelin, prolamin and globulin. Functions synergistically with RISBZ/BZIP58 to positively regulate quantitatively many seed storage proteins. Functions synergistically with RISBZ1/BZIP58 to positively regulate some metabolic enzymes, such as alanine aminotransferase and pyruvate phosphate dikinase, that are expressed in developing seeds. Functions synergistically with RISBZ1/BZIP58 to positively regulate genes that are key players in the development of aleurone layers. Functions synergistically with RISBZ1/BZIP58 to positively regulate the glutelin GLUD-1 gene in endosperm of developing seeds. Can activate the expression of the bifunctional lysine-degrading enzyme, lysine ketoglutarate reductase/saccharopine dehydrogenase (LKR/SDH), one of the key regulators determining free lysine content in plants. In germinating seeds, involved in the gibberellin-mediated activation of the alpha-amylase AMY1.1/AMY1A gene. This is Dof zinc finger protein 3 from Oryza sativa subsp. japonica (Rice).